Reading from the N-terminus, the 98-residue chain is C-X-C motif chemokine 10 (98 aa).

A signal peptide spans 1 to 21; sequence MNQTAILICCLVFLTLSGIQG. A Citrulline modification is found at arginine 26. 2 cysteine pairs are disulfide-bonded: cysteine 30/cysteine 57 and cysteine 32/cysteine 74.

This sequence belongs to the intercrine alpha (chemokine CxC) family.

It localises to the secreted. In terms of biological role, chemotactic for monocytes and T-lymphocytes. Binds to CXCR3. In Macaca mulatta (Rhesus macaque), this protein is C-X-C motif chemokine 10 (CXCL10).